Reading from the N-terminus, the 923-residue chain is Transportin-3 (923 aa).

Met-1 carries the post-translational modification N-acetylmethionine. Residue Ser-74 is modified to Phosphoserine. A phosphothreonine mark is found at His-242 and Thr-896.

In terms of assembly, interacts with (GTP-bound) Ran. Interacts with (phosphorylated) SFRS1 and SFRS2; leading to their nuclear import. Interacts with NUP62. Interacts with RBM4. Interacts with CPSF6, promoting its nuclear import.

Its subcellular location is the nucleus envelope. It localises to the cytoplasm. Functionally, importin, which transports target proteins into the nucleus. Specifically mediates the nuclear import of splicing factor serine/arginine (SR) proteins, such as RBM4, SFRS1 and SFRS2, by recognizing phosphorylated SR domains. Also mediates the nuclear import of serine/arginine (SR) protein CPSF6, independently of CPSF6 phosphorylation. The nuclear import process is regulated by the small GTPase Ran that partitions between cytoplasm and nucleus in the predominantly GDP- and GTP-bound form, respectively. Importin associates with target cargo proteins in the cytoplasm, and the competitive binding of GTP-bound Ran induces the release of cargos in the nucleus. The sequence is that of Transportin-3 from Mus musculus (Mouse).